The chain runs to 572 residues: Putative lysozyme-like protein (572 aa).

A signal peptide spans 1–17; it reads MRLLLVLLALIFSVVSA. Positions 145–165 are enriched in low complexity; the sequence is MSSSGSSSSSGSSGSSSSSSG. Disordered regions lie at residues 145–199, 231–297, 326–388, and 433–469; these read MSSS…HGGG, SSSS…GGGV, ANSV…GERK, and AGSSSSSGSSGSSSSSSSSGSSGGSSGGSSGGGGGSG. A compositionally biased stretch (gly residues) spans 166–185; it reads SSGGGSSGGGSGGGGGGSGL. A compositionally biased stretch (low complexity) spans 231–240; the sequence is SSSSADAGSS. Gly residues predominate over residues 258–282; sequence STGGTGGSSGSSGGGSGGGGGGSGL. The segment covering 326–358 has biased composition (low complexity); it reads ANSVSSLAGSMSSSGSSSSSGSSGSSSSSSSSG. The span at 359-382 shows a compositional bias: gly residues; it reads SSGGSSGGGSSGGGSGGGGGGSGL. Positions 433-452 are enriched in low complexity; sequence AGSSSSSGSSGSSSSSSSSG. Residues 453–469 are compositionally biased toward gly residues; it reads SSGGSSGGSSGGGGGSG.

It belongs to the dictyostelium lysozyme family.

This is Putative lysozyme-like protein (alyL) from Dictyostelium discoideum (Social amoeba).